The sequence spans 344 residues: Beta-hexosaminidase (344 aa).

Residues Asp-60, Arg-68, Arg-132, and 162–163 (KH) contribute to the substrate site. The Proton donor/acceptor role is filled by His-175. The active-site Nucleophile is the Asp-247.

The protein belongs to the glycosyl hydrolase 3 family. NagZ subfamily.

The protein resides in the cytoplasm. It carries out the reaction Hydrolysis of terminal non-reducing N-acetyl-D-hexosamine residues in N-acetyl-beta-D-hexosaminides.. It participates in cell wall biogenesis; peptidoglycan recycling. Plays a role in peptidoglycan recycling by cleaving the terminal beta-1,4-linked N-acetylglucosamine (GlcNAc) from peptide-linked peptidoglycan fragments, giving rise to free GlcNAc, anhydro-N-acetylmuramic acid and anhydro-N-acetylmuramic acid-linked peptides. The polypeptide is Beta-hexosaminidase (Haemophilus ducreyi (strain 35000HP / ATCC 700724)).